The following is a 1940-amino-acid chain: Myosin-3 (1940 aa).

A Myosin N-terminal SH3-like domain is found at 33-82; that stretch reads DAKTYCFVVDSKEEYAKGKIKSSQDGKVTVETEDNRTLVVKPEDVYAMNP. A Myosin motor domain is found at 86–779; it reads DRIEDMAMLT…LLGTLEEMRD (694 aa). N6,N6,N6-trimethyllysine is present on lysine 130. 179-186 is a binding site for ATP; the sequence is GESGAGKT. 2 actin-binding regions span residues 656 to 678 and 758 to 772; these read LNKLMSNLRTTHPHFVRCIIPNE and KFGHTKVFFKAGLLG. The 30-residue stretch at 782–811 folds into the IQ domain; sequence LAKLITRTQAVCRGFLMRVEFQKMVQRRES. Residues 840–1933 are a coiled coil; sequence LLKSAETEKE…KTRDFTSSRM (1094 aa).

This sequence belongs to the TRAFAC class myosin-kinesin ATPase superfamily. Myosin family. As to quaternary structure, muscle myosin is a hexameric protein that consists of 2 heavy chain subunits (MHC), 2 alkali light chain subunits (MLC) and 2 regulatory light chain subunits (MLC-2). In terms of tissue distribution, expressed in fetal bone, thymus, placenta, heart, brain, and liver.

The protein resides in the cytoplasm. It localises to the myofibril. In terms of biological role, muscle contraction. This Homo sapiens (Human) protein is Myosin-3 (MYH3).